The chain runs to 657 residues: MGELADLVVVPSQPPLAGGRRDRLAALLELAAADDVDGLRGALAEGGEEAAELADGVGLWYGRSKAYEARTPLMVAATYGSAGVVSLLVGLGGCVDVNRRPGADGATALHCAASGGSRNAVAVVKLLLAAGADPATPDSAGRFPADVILAPPASPDALGDLEVLLGRRRALAVATSVASGSSSPPLSSSPDEGNRSPSSRSSSLSPITVDRGKKEYPVDPTLPDIKSSVYASDEFRMFAFKVRPCSRAYSHDWTECPFVHPGENARRRDPRKHPYTAVPCPNFRRPGGCPSGDSCEFSHGVFESWLHPSQYRTRLCKEGAACARRICFFAHDEDELRHVPHNSGAGLLSPRASSSIDMTAAAALGLLPGSPTRHFAPPPVSPSAGSNGGAAAAHWLQGSRLRSSFNARDAAVDDLGMLLEWESQYLGALCLPPSSRPQPRLSAGLSIRPTIAPSNLEDMYASDMAMSPRFPNDQGHSVYSPAHKSALLNKLHQQKGLLSPVNTNRMYSPRALDPSSLAHSPFGGMSPRSPRTMEPTSPLSARVGAPATQRPSVGSPRNSSAWGTVGSPMGKVDWGVDSEELVRLRRPAQPGFGEDETDVSWVQSLVSNAELNGKRGEVQGMPGTSALMNRPDLNNQGDLLDQTVIGAWLEQMHLDQK.

ANK repeat units follow at residues 68–97 (EART…CVDV) and 104–136 (DGAT…DPAT). The span at 176–206 (SVASGSSSPPLSSSPDEGNRSPSSRSSSLSP) shows a compositional bias: low complexity. Residues 176-222 (SVASGSSSPPLSSSPDEGNRSPSSRSSSLSPITVDRGKKEYPVDPTL) form a disordered region. 2 C3H1-type zinc fingers span residues 274–302 (PYTA…HGVF) and 311–333 (YRTR…AHDE). Residues 507 to 566 (YSPRALDPSSLAHSPFGGMSPRSPRTMEPTSPLSARVGAPATQRPSVGSPRNSSAWGTVG) form a disordered region. The segment covering 549-562 (QRPSVGSPRNSSAW) has biased composition (polar residues).

This Oryza sativa subsp. japonica (Rice) protein is Zinc finger CCCH domain-containing protein 50.